We begin with the raw amino-acid sequence, 419 residues long: Cyclin-B2-2 (419 aa).

The disordered stretch occupies residues 79–116 (QPSSAPLAPIGSERQKRTADSAFHGPADMECTKITSDD).

Belongs to the cyclin family. Cyclin AB subfamily. As to quaternary structure, interacts with CDKB2-1. As to expression, expressed in the intercalary meristem and the elongation zone of internodes. Expressed in adventitious roots at all nodes under submergence conditions.

Its subcellular location is the nucleus. Functionally, involved in the control of the cell cycle at the G2/M (mitosis) transition. May associate to CDKB2-1 and activate CDKB2-1 kinase to promote cell division. In Oryza sativa subsp. indica (Rice), this protein is Cyclin-B2-2 (CYCB2-2).